The primary structure comprises 561 residues: MNSNTPTDIVSFCFETQADHNATGPILIDGLTPTRSLTLHQFRQLVCQLIAGLHEQKIQQGQCILVHLENSILYPALFLAIVGVGAVYMGAHPASSATELEHLLSLANPSLIITGRDTLSTVLQCTMSPSGGKKEKIPSDRVWVLNDIDQVLCEAFSSTPDASMGDAAYHHRRDITKLLHSGQRPWRTFDDDGQKSKITPAAMFATSGTSGLPKAAILSHHALIQQHISIHHPVPYPVTRLLTLPLFHRYGALVALFFPTRYAQPLILLPGFQLRPFLSAIHVHGVTETYLSPAMVHILIQSTPQSSSIRESLRSLRYVCVGGAPIDSRPLQSLQDMLHPEACVAQAWGMTETATVFQDRYCLPSRQFDKGSVGVVLPGYQVRLVDVSGSGRVLDNATEIPGELQVRGSGLFTSYKGHPDHTDGDGWFSTGDVMYQKNGHYFLVGRMKEMIKVRGYQVSPVELEAELAQHPLVKDAAVIGVLATDGSSELPRAYVVPLSWAERPSPEDIYDFMRQRLAGYKFLEGGVVFVDSIPRNSGGKIRRTKLSELDDQRDKLIALLT.

N-linked (GlcNAc...) asparagine glycosylation occurs at Asn21. A helical transmembrane segment spans residues 71–91 (SILYPALFLAIVGVGAVYMGA). Residue 203 to 214 (MFATSGTSGLPK) participates in AMP binding. N-linked (GlcNAc...) asparagine glycosylation occurs at Asn396. The interval 462–540 (ELEAELAQHP…DSIPRNSGGK (79 aa)) is AMP-binding.

This sequence belongs to the ATP-dependent AMP-binding enzyme family.

Its subcellular location is the membrane. The catalysed reaction is acetate + ATP + CoA = acetyl-CoA + ADP + phosphate. It catalyses the reaction propanoate + ATP + CoA = propanoyl-CoA + AMP + diphosphate. Its pathway is secondary metabolite biosynthesis. Its function is as follows. Acyl-CoA ligase; part of the gene cluster that mediates the biosynthesis of 2,4'-dihydroxy-3'-methoxypropiophenone. The first step of the pathway is the conversion of acetate into acetyl-CoA by the acyl-CoA ligase ppsA. Acetyl-CoA is then used as a starter unit by the polyketide synthase ppsB and condensed with 4 malonyl-CoA unit to produce the pentaketide backbone. During polyketide extension, the polykedite chain is probably reduced and dehydrated by the KR and PT domains, respectively. O-methylation seems to be catalyzed by an unknown methyltransferase rather than by the CMeT domain of ppsB. Two hydroxylations and one further decarboxylation step catalyzed by yet unknown enzymes are then required to yield 4'-hydroxy-3'-methoxypropiophenone. PpsC functions as a carrier protein to transport 4'-hydroxy-3'-methoxypropiophenone to a specific cell compartment in which 4'-hydroxy-3'-methoxypropiophenone is hydroxylated to 2,4'-dihydroxy-3'-methoxypropiophenone by a still to be identified enzyme. The protein is Acyl-CoA ligase ppsA of Aspergillus oryzae (strain ATCC 42149 / RIB 40) (Yellow koji mold).